We begin with the raw amino-acid sequence, 892 residues long: DNA replication licensing factor mcm6 (892 aa).

A phosphoserine mark is found at S96 and S98. The 208-residue stretch at 426–633 (IYSRLTNSLA…VDRHLAKHIV (208 aa)) folds into the MCM domain. Residue 476-483 (GDPSTSKS) coordinates ATP. An Arginine finger motif is present at residues 608–611 (SRFD). Residues 748 to 758 (EDDAEAQELEN) show a composition bias toward acidic residues. The segment at 748-774 (EDDAEAQELENDNTNTTNGNDNVSSEE) is disordered. Residues 759-769 (DNTNTTNGNDN) show a composition bias toward low complexity.

Belongs to the MCM family. As to quaternary structure, component of the mcm2-7 complex. The complex forms a toroidal hexameric ring with the proposed subunit order mcm2-mcm6-mcm4-mcm7-mcm3-mcm5. The heterodimers of mcm4/mcm6 and mcm3/mcm5 interact with mcm2 and mcm7. Interacts with sld3.

The protein resides in the nucleus. It catalyses the reaction ATP + H2O = ADP + phosphate + H(+). Its function is as follows. Acts as a component of the mcm2-7 complex (mcm complex) which is the putative replicative helicase essential for 'once per cell cycle' DNA replication initiation and elongation in eukaryotic cells. The active ATPase sites in the mcm2-7 ring are formed through the interaction surfaces of two neighboring subunits such that a critical structure of a conserved arginine finger motif is provided in trans relative to the ATP-binding site of the Walker A box of the adjacent subunit. The six ATPase active sites, however, are likely to contribute differentially to the complex helicase activity. The chain is DNA replication licensing factor mcm6 (mcm6) from Schizosaccharomyces pombe (strain 972 / ATCC 24843) (Fission yeast).